The following is a 445-amino-acid chain: MHSQIWVVSTLLISIVLIVLTIVKFKFHPFLALLLASFFVGTMMGMGPLDMVNAIESGIGGTLGFLAAVIGLGTILGKMMEVSGAAERIGLTLQRCRWLSVDVIMVLVGLICGITLFVEVGVVLLIPLAFSIAKKTNTSLLKLAIPLCTALMAVHCVVPPHPAALYVANKLGADIGSVIVYGLLVGLMASLIGGPLFLKFLGQRLPFKPVPTEFADLKVRDEKTLPSLGATLFTILLPIALMLVKTIAELNMARESGLYILVEFIGNPITAMFIAVFVAYYVLGIRQHMSMGTMLTHTENGFGSIANILLIIGAGGAFNAILKSSSLADTLAVILSNMHMHPILLAWLVALILHAAVGSATVAMMGATAIVAPMLPLYPDISPEIIAIAIGSGAIGCTIVTDSLFWLVKQYCGATLNETFKYYTTATFIASVVALAGTFLLSFII.

The Cytoplasmic portion of the chain corresponds to 1–4; sequence MHSQ. A helical membrane pass occupies residues 5–25; sequence IWVVSTLLISIVLIVLTIVKF. Over 26–28 the chain is Periplasmic; that stretch reads KFH. The chain crosses the membrane as a helical span at residues 29–49; that stretch reads PFLALLLASFFVGTMMGMGPL. At 50–56 the chain is on the cytoplasmic side; the sequence is DMVNAIE. The helical transmembrane segment at 57-77 threads the bilayer; it reads SGIGGTLGFLAAVIGLGTILG. Residues 78–105 lie on the Periplasmic side of the membrane; it reads KMMEVSGAAERIGLTLQRCRWLSVDVIM. The helical transmembrane segment at 106-126 threads the bilayer; it reads VLVGLICGITLFVEVGVVLLI. Topologically, residues 127–139 are cytoplasmic; the sequence is PLAFSIAKKTNTS. A helical membrane pass occupies residues 140-160; sequence LLKLAIPLCTALMAVHCVVPP. Topologically, residues 161–177 are periplasmic; sequence HPAALYVANKLGADIGS. The helical transmembrane segment at 178-198 threads the bilayer; the sequence is VIVYGLLVGLMASLIGGPLFL. Residues 199–223 are Cytoplasmic-facing; it reads KFLGQRLPFKPVPTEFADLKVRDEK. Residues 224–244 form a helical membrane-spanning segment; that stretch reads TLPSLGATLFTILLPIALMLV. The Periplasmic segment spans residues 245–257; that stretch reads KTIAELNMARESG. A helical membrane pass occupies residues 258 to 278; the sequence is LYILVEFIGNPITAMFIAVFV. Residues 279-301 are Cytoplasmic-facing; sequence AYYVLGIRQHMSMGTMLTHTENG. The chain crosses the membrane as a helical span at residues 302-322; sequence FGSIANILLIIGAGGAFNAIL. The Periplasmic portion of the chain corresponds to 323 to 342; sequence KSSSLADTLAVILSNMHMHP. 3 helical membrane-spanning segments follow: residues 343 to 363, 364 to 384, and 385 to 405; these read ILLAWLVALILHAAVGSATVA, MMGATAIVAPMLPLYPDISPE, and IIAIAIGSGAIGCTIVTDSLF. Over 406 to 424 the chain is Cytoplasmic; that stretch reads WLVKQYCGATLNETFKYYT. The chain crosses the membrane as a helical span at residues 425 to 445; that stretch reads TATFIASVVALAGTFLLSFII.

The protein belongs to the GntP permease family.

It is found in the cell inner membrane. Functionally, a D-serine-specific transporter, may function as a H(+) symporter. The chain is D-serine transporter DsdX from Escherichia coli (strain K12).